A 673-amino-acid polypeptide reads, in one-letter code: DNA ligase (673 aa).

NAD(+) is bound by residues 32 to 36 (DAEYD), 81 to 82 (SL), and Glu-113. Lys-115 (N6-AMP-lysine intermediate) is an active-site residue. NAD(+) is bound by residues Arg-136, Glu-173, Lys-290, and Lys-314. Zn(2+) is bound by residues Cys-408, Cys-411, Cys-426, and Cys-432. The BRCT domain occupies 595-673 (EIDSPFAGKT…EAEMIRLLGA (79 aa)).

It belongs to the NAD-dependent DNA ligase family. LigA subfamily. The cofactor is Mg(2+). Mn(2+) serves as cofactor.

The catalysed reaction is NAD(+) + (deoxyribonucleotide)n-3'-hydroxyl + 5'-phospho-(deoxyribonucleotide)m = (deoxyribonucleotide)n+m + AMP + beta-nicotinamide D-nucleotide.. Functionally, DNA ligase that catalyzes the formation of phosphodiester linkages between 5'-phosphoryl and 3'-hydroxyl groups in double-stranded DNA using NAD as a coenzyme and as the energy source for the reaction. It is essential for DNA replication and repair of damaged DNA. The polypeptide is DNA ligase (Serratia proteamaculans (strain 568)).